The following is a 568-amino-acid chain: Protein KATNIP homolog (568 aa).

A compositionally biased stretch (basic and acidic residues) spans 1–20 (MSDSDLKEIEKNAENIKLEP). Residues 1–30 (MSDSDLKEIEKNAENIKLEPAEDEVNEEDQ) form a disordered region. Residues 21 to 30 (AEDEVNEEDQ) are compositionally biased toward acidic residues.

Expressed in most ciliated neuronal cells. Not expressed in non-ciliated cells.

Its subcellular location is the cytoplasm. It localises to the cytoskeleton. The protein resides in the cilium axoneme. The protein localises to the cilium basal body. Its function is as follows. May regulate ciliary A-tubule number and, along with arl-13, controls cilium integrity. This chain is Protein KATNIP homolog, found in Caenorhabditis elegans.